A 106-amino-acid chain; its full sequence is MYEVYCGKAVSKSFKNSMKNAMSASAAADLASVSSLELDVKVLAAKLWLIRKLTRRIFLMREKEGANIIDTQYFQECCKWFVTGYRNHLIRNNTPEYDQVKQNNKE.

This is an uncharacterized protein from Saccharomyces cerevisiae (strain ATCC 204508 / S288c) (Baker's yeast).